We begin with the raw amino-acid sequence, 496 residues long: Probable cytosol aminopeptidase (496 aa).

Positions 258 and 263 each coordinate Mn(2+). The active site involves Lys-270. Residues Asp-281, Asp-340, and Glu-342 each contribute to the Mn(2+) site. Arg-344 is an active-site residue.

Belongs to the peptidase M17 family. Mn(2+) is required as a cofactor.

Its subcellular location is the cytoplasm. The catalysed reaction is Release of an N-terminal amino acid, Xaa-|-Yaa-, in which Xaa is preferably Leu, but may be other amino acids including Pro although not Arg or Lys, and Yaa may be Pro. Amino acid amides and methyl esters are also readily hydrolyzed, but rates on arylamides are exceedingly low.. It carries out the reaction Release of an N-terminal amino acid, preferentially leucine, but not glutamic or aspartic acids.. In terms of biological role, presumably involved in the processing and regular turnover of intracellular proteins. Catalyzes the removal of unsubstituted N-terminal amino acids from various peptides. The polypeptide is Probable cytosol aminopeptidase (Helicobacter pylori (strain G27)).